A 404-amino-acid polypeptide reads, in one-letter code: Cysteine desulfurase IscS (404 aa).

Pyridoxal 5'-phosphate-binding positions include 75-76, N155, Q183, and 203-205; these read AT and SAH. The residue at position 206 (K206) is an N6-(pyridoxal phosphate)lysine. T243 provides a ligand contact to pyridoxal 5'-phosphate. Residue C328 is the Cysteine persulfide intermediate of the active site. C328 is a [2Fe-2S] cluster binding site.

It belongs to the class-V pyridoxal-phosphate-dependent aminotransferase family. NifS/IscS subfamily. As to quaternary structure, homodimer. Forms a heterotetramer with IscU, interacts with other sulfur acceptors. Pyridoxal 5'-phosphate is required as a cofactor.

The protein localises to the cytoplasm. The catalysed reaction is (sulfur carrier)-H + L-cysteine = (sulfur carrier)-SH + L-alanine. It participates in cofactor biosynthesis; iron-sulfur cluster biosynthesis. Its function is as follows. Master enzyme that delivers sulfur to a number of partners involved in Fe-S cluster assembly, tRNA modification or cofactor biosynthesis. Catalyzes the removal of elemental sulfur atoms from cysteine to produce alanine. Functions as a sulfur delivery protein for Fe-S cluster synthesis onto IscU, an Fe-S scaffold assembly protein, as well as other S acceptor proteins. The sequence is that of Cysteine desulfurase IscS from Neisseria gonorrhoeae (strain ATCC 700825 / FA 1090).